A 468-amino-acid chain; its full sequence is RUS family member 1 (468 aa).

N-acetylalanine is present on A2. A Phosphothreonine modification is found at T49. The helical transmembrane segment at 247–267 (LLMLPLVSGCPGFSLGCFFFL) threads the bilayer.

It belongs to the RUS1 family.

Its subcellular location is the membrane. The chain is RUS family member 1 from Homo sapiens (Human).